The sequence spans 578 residues: PX domain-containing protein kinase-like protein (578 aa).

The 113-residue stretch at 14–126 folds into the PX domain; that stretch reads LDDTVPLTAA…KFLDPNNYSA (113 aa). The Protein kinase domain occupies 88 to 481; it reads FIAERQKGLQ…LENSEEHSAK (394 aa). Basic residues-rich tracts occupy residues 437–448 and 457–469; these read IHQHRRLTRAQS and KKRK…KSKR. Disordered stretches follow at residues 437 to 548 and 559 to 578; these read IHQH…NGMS and FQKG…PKIG. A compositionally biased stretch (low complexity) spans 483–513; that stretch reads SNSNNSAGSGASSPLTSPSSPTPPSTSGISA. Pro residues predominate over residues 514–530; the sequence is LPPPPPPPPPPAAPLPP. The WH2 domain occupies 548 to 567; sequence SRGALLSSIQNFQKGTLRKA. Over residues 568 to 578 the composition is skewed to basic and acidic residues; sequence KTCDHSAPKIG.

Belongs to the protein kinase superfamily. In terms of tissue distribution, widely expressed in all tissues examined except in heart. Isoform 1 is expressed in high levels in the brain, skeletal muscle, spleen and testis. Isoform 7 expression has yet to be demonstrated.

The protein localises to the cytoplasm. Its subcellular location is the cell membrane. Its function is as follows. Binds to and modulates brain Na,K-ATPase subunits ATP1B1 and ATP1B3 and may thereby participate in the regulation of electrical excitability and synaptic transmission. May not display kinase activity. This chain is PX domain-containing protein kinase-like protein, found in Homo sapiens (Human).